The chain runs to 146 residues: Putative pre-16S rRNA nuclease (146 aa).

The protein belongs to the YqgF nuclease family.

It is found in the cytoplasm. In terms of biological role, could be a nuclease involved in processing of the 5'-end of pre-16S rRNA. The polypeptide is Putative pre-16S rRNA nuclease (Pseudomonas savastanoi pv. phaseolicola (strain 1448A / Race 6) (Pseudomonas syringae pv. phaseolicola (strain 1448A / Race 6))).